Reading from the N-terminus, the 222-residue chain is Secreted protein D (222 aa).

An N-terminal signal peptide occupies residues 1-22 (MKIYYLFFVLIYLIYFINLVYC). N25 carries an N-linked (GlcNAc...) asparagine glycan.

The protein belongs to the Sct family.

The protein resides in the secreted. The protein is Secreted protein D of Dictyostelium discoideum (Social amoeba).